The chain runs to 451 residues: E3 ubiquitin-protein ligase trul-1 (451 aa).

Residues 13–54 (CSICFEDLKQNDKISAIVCGHIYHHGCISQWIATKRQCPSCR) form an RING-type; atypical zinc finger. 2 coiled-coil regions span residues 96 to 130 (LKVEQEKLGTLNTENKNLKDTVKSLEKKIIREKDK) and 209 to 243 (NKDLTDKRREAAKEIEQLKMEVQSLKRAAQEDAAI). Disordered stretches follow at residues 270-297 (RDVLETETPPPAKRKSMGFDESSQMIDP) and 389-442 (KIPN…SSTS). Residues 427 to 442 (STRISSFFSRTTSSTS) are compositionally biased toward low complexity.

The protein belongs to the TRAIP family.

Its subcellular location is the nucleus. It localises to the chromosome. It catalyses the reaction S-ubiquitinyl-[E2 ubiquitin-conjugating enzyme]-L-cysteine + [acceptor protein]-L-lysine = [E2 ubiquitin-conjugating enzyme]-L-cysteine + N(6)-ubiquitinyl-[acceptor protein]-L-lysine.. The protein operates within protein modification; protein ubiquitination. In terms of biological role, E3 ubiquitin ligase that acts as a key regulator of DNA repair in response to replication stress. Acts by mediating ubiquitination of the CMG helicase complex, promoting the unloading of the CMG helicase complex by the p97 ATPase (cdc-48.1 or cdc-48.2). The polypeptide is E3 ubiquitin-protein ligase trul-1 (Caenorhabditis elegans).